A 177-amino-acid chain; its full sequence is MSDKPASMYRDIDKPAYTRREYITGIPGSKVAQYKMGNFEADPEDYEVQISLIVDEEVQIRHGSLEASRLSANRRMLKELGEDGDYKMILRKFPHQVIRENKQATGAGADRVSDGMRQAFGKIVGTAARINKGERVFTIWCHPEDADAAKDAFRRAYNKISPPCTIKVERGEELLIA.

The protein belongs to the universal ribosomal protein uL16 family.

The protein is Large ribosomal subunit protein uL16 of Natronomonas pharaonis (strain ATCC 35678 / DSM 2160 / CIP 103997 / JCM 8858 / NBRC 14720 / NCIMB 2260 / Gabara) (Halobacterium pharaonis).